The following is a 145-amino-acid chain: Glycine-rich protein (145 aa).

The N-terminal stretch at 1 to 19 is a signal peptide; the sequence is MKLTLAVVVVFAYIATTNA.

As to expression, component of the acid-insoluble and acid-soluble organic matrix of calcified layers of the shell (at protein level).

The protein resides in the secreted. This is Glycine-rich protein from Lottia gigantea (Giant owl limpet).